A 95-amino-acid polypeptide reads, in one-letter code: Small ribosomal subunit protein bS18 (95 aa).

This sequence belongs to the bacterial ribosomal protein bS18 family. Part of the 30S ribosomal subunit. Forms a tight heterodimer with protein bS6.

Binds as a heterodimer with protein bS6 to the central domain of the 16S rRNA, where it helps stabilize the platform of the 30S subunit. The polypeptide is Small ribosomal subunit protein bS18 (Acidiphilium cryptum (strain JF-5)).